Here is a 117-residue protein sequence, read N- to C-terminus: Immunoglobulin heavy variable 4-4 (117 aa).

A signal peptide spans 1–19; it reads MKHLWFFLLLVAAPRWVLS. The tract at residues 20–44 is framework-1; the sequence is QVQLQESGPGLVKPSGTLSLTCAVS. The Ig-like domain maps to 20–117; it reads QVQLQESGPG…ADTAVYYCAR (98 aa). Cysteine 41 and cysteine 115 are oxidised to a cystine. The segment at 45–53 is complementarity-determining-1; sequence GGSISSSNW. The framework-2 stretch occupies residues 54–70; it reads WSWVRQPPGKGLEWIGE. The complementarity-determining-2 stretch occupies residues 71 to 77; sequence IYHSGST. The segment at 78 to 115 is framework-3; it reads NYNPSLKSRVTISVDKSKNQFSLKLSSVTAADTAVYYC. A complementarity-determining-3 region spans residues 116-117; the sequence is AR.

In terms of assembly, immunoglobulins are composed of two identical heavy chains and two identical light chains; disulfide-linked.

Its subcellular location is the secreted. It is found in the cell membrane. In terms of biological role, v region of the variable domain of immunoglobulin heavy chains that participates in the antigen recognition. Immunoglobulins, also known as antibodies, are membrane-bound or secreted glycoproteins produced by B lymphocytes. In the recognition phase of humoral immunity, the membrane-bound immunoglobulins serve as receptors which, upon binding of a specific antigen, trigger the clonal expansion and differentiation of B lymphocytes into immunoglobulins-secreting plasma cells. Secreted immunoglobulins mediate the effector phase of humoral immunity, which results in the elimination of bound antigens. The antigen binding site is formed by the variable domain of one heavy chain, together with that of its associated light chain. Thus, each immunoglobulin has two antigen binding sites with remarkable affinity for a particular antigen. The variable domains are assembled by a process called V-(D)-J rearrangement and can then be subjected to somatic hypermutations which, after exposure to antigen and selection, allow affinity maturation for a particular antigen. The sequence is that of Immunoglobulin heavy variable 4-4 from Homo sapiens (Human).